The primary structure comprises 143 residues: MSLSAKDKATVKLFWGKMSGKSELIGADALSRMLAVYPQTKIYFSHWKSCSPGSPEVKKHGKTIMMGIGEAVTKMDDLERGLLTLSELHAFKLRVDPTNFKLLSLNILVVMAIMFPLDFTPMAHLAVDKFLCALALALSEKYR.

At Ser-2 the chain carries N-acetylserine. In terms of domain architecture, Globin spans Ser-2–Arg-143. Residue His-60 coordinates O2. His-89 lines the heme b pocket.

The protein belongs to the globin family. In terms of assembly, hb 2 is a heterotetramer of two alpha-2 and two beta-1 chains. Hb 3 is a heterotetramer of two alpha-2 and two beta-2 chains. As to expression, red blood cells.

Its function is as follows. Involved in oxygen transport from gills to the various peripheral tissues. This Boreogadus saida (Polar cod) protein is Hemoglobin subunit alpha-2 (hba2).